We begin with the raw amino-acid sequence, 273 residues long: Dermonecrotic toxin LapSicTox-alphaIB1ai (273 aa).

Histidine 5 is a catalytic residue. Residues glutamate 25 and aspartate 27 each coordinate Mg(2+). Histidine 41 functions as the Nucleophile in the catalytic mechanism. 2 disulfides stabilise this stretch: cysteine 45/cysteine 51 and cysteine 47/cysteine 190. Aspartate 85 contributes to the Mg(2+) binding site. Residue asparagine 250 is glycosylated (N-linked (GlcNAc...) asparagine).

It belongs to the arthropod phospholipase D family. Class II subfamily. The cofactor is Mg(2+). As to expression, expressed by the venom gland.

Its subcellular location is the secreted. It catalyses the reaction an N-(acyl)-sphingosylphosphocholine = an N-(acyl)-sphingosyl-1,3-cyclic phosphate + choline. It carries out the reaction an N-(acyl)-sphingosylphosphoethanolamine = an N-(acyl)-sphingosyl-1,3-cyclic phosphate + ethanolamine. The catalysed reaction is a 1-acyl-sn-glycero-3-phosphocholine = a 1-acyl-sn-glycero-2,3-cyclic phosphate + choline. The enzyme catalyses a 1-acyl-sn-glycero-3-phosphoethanolamine = a 1-acyl-sn-glycero-2,3-cyclic phosphate + ethanolamine. Dermonecrotic toxins cleave the phosphodiester linkage between the phosphate and headgroup of certain phospholipids (sphingolipid and lysolipid substrates), forming an alcohol (often choline) and a cyclic phosphate. This toxin acts on sphingomyelin (SM). It may also act on ceramide phosphoethanolamine (CPE), lysophosphatidylcholine (LPC) and lysophosphatidylethanolamine (LPE), but not on lysophosphatidylserine (LPS), and lysophosphatidylglycerol (LPG). It acts by transphosphatidylation, releasing exclusively cyclic phosphate products as second products. Induces dermonecrosis, hemolysis, increased vascular permeability, edema, inflammatory response, and platelet aggregation. The sequence is that of Dermonecrotic toxin LapSicTox-alphaIB1ai from Loxosceles apachea (Apache recluse spider).